We begin with the raw amino-acid sequence, 351 residues long: Uroporphyrinogen decarboxylase (351 aa).

Substrate-binding positions include 26–30 (RQAGR), Asp-75, Tyr-151, Ser-206, and His-321.

It belongs to the uroporphyrinogen decarboxylase family. Homodimer.

The protein localises to the cytoplasm. The enzyme catalyses uroporphyrinogen III + 4 H(+) = coproporphyrinogen III + 4 CO2. It functions in the pathway porphyrin-containing compound metabolism; protoporphyrin-IX biosynthesis; coproporphyrinogen-III from 5-aminolevulinate: step 4/4. Its function is as follows. Catalyzes the decarboxylation of four acetate groups of uroporphyrinogen-III to yield coproporphyrinogen-III. This is Uroporphyrinogen decarboxylase from Koribacter versatilis (strain Ellin345).